Consider the following 657-residue polypeptide: Acetyl-coenzyme A synthetase (657 aa).

Residues 192 to 195 and threonine 311 each bind CoA; that span reads RRGK. ATP contacts are provided by residues 387–389, 411–416, aspartate 504, arginine 519, and arginine 530; these read GEP and DTWWQT. The Mg(2+) site is built by histidine 543 and valine 546. A CoA-binding site is contributed by arginine 592. The residue at position 617 (lysine 617) is an N6-acetyllysine.

Belongs to the ATP-dependent AMP-binding enzyme family. Mg(2+) serves as cofactor. Post-translationally, acetylated. Deacetylation by the SIR2-homolog deacetylase activates the enzyme.

The enzyme catalyses acetate + ATP + CoA = acetyl-CoA + AMP + diphosphate. Its function is as follows. Catalyzes the conversion of acetate into acetyl-CoA (AcCoA), an essential intermediate at the junction of anabolic and catabolic pathways. AcsA undergoes a two-step reaction. In the first half reaction, AcsA combines acetate with ATP to form acetyl-adenylate (AcAMP) intermediate. In the second half reaction, it can then transfer the acetyl group from AcAMP to the sulfhydryl group of CoA, forming the product AcCoA. The protein is Acetyl-coenzyme A synthetase of Campylobacter jejuni subsp. jejuni serotype O:6 (strain 81116 / NCTC 11828).